A 482-amino-acid chain; its full sequence is Pup--protein ligase (482 aa).

Glutamate 16 is a Mg(2+) binding site. Position 60 (arginine 60) interacts with ATP. Tyrosine 62 contacts Mg(2+). Aspartate 64 (proton acceptor) is an active-site residue. Glutamate 70 provides a ligand contact to Mg(2+). Positions 73 and 440 each coordinate ATP.

This sequence belongs to the Pup ligase/Pup deamidase family. Pup-conjugating enzyme subfamily.

It carries out the reaction ATP + [prokaryotic ubiquitin-like protein]-L-glutamate + [protein]-L-lysine = ADP + phosphate + N(6)-([prokaryotic ubiquitin-like protein]-gamma-L-glutamyl)-[protein]-L-lysine.. It participates in protein degradation; proteasomal Pup-dependent pathway. Its pathway is protein modification; protein pupylation. Its function is as follows. Catalyzes the covalent attachment of the prokaryotic ubiquitin-like protein modifier Pup to the proteasomal substrate proteins, thereby targeting them for proteasomal degradation. This tagging system is termed pupylation. The ligation reaction involves the side-chain carboxylate of the C-terminal glutamate of Pup and the side-chain amino group of a substrate lysine. In Corynebacterium glutamicum (strain R), this protein is Pup--protein ligase.